The following is a 290-amino-acid chain: Inositol monophosphatase 2 (290 aa).

Residues glutamate 83, aspartate 103, isoleucine 105, and aspartate 106 each contribute to the Mg(2+) site. Glutamate 83 contributes to the substrate binding site. Substrate contacts are provided by residues 105–108 (IDGT), 207–209 (GSS), glutamine 226, and aspartate 233. A Mg(2+)-binding site is contributed by aspartate 233.

It belongs to the inositol monophosphatase superfamily. In terms of assembly, homodimer. Mg(2+) serves as cofactor. As to expression, mostly expressed in brain, small intestine, heart, kidney, and spleen (at protein level).

Its subcellular location is the cytoplasm. The catalysed reaction is a myo-inositol phosphate + H2O = myo-inositol + phosphate. The enzyme catalyses 1D-myo-inositol 1-phosphate + H2O = myo-inositol + phosphate. It catalyses the reaction 1D-myo-inositol 2-phosphate + H2O = myo-inositol + phosphate. It carries out the reaction 1D-myo-inositol 3-phosphate + H2O = myo-inositol + phosphate. The catalysed reaction is 1D-myo-inositol 4-phosphate + H2O = myo-inositol + phosphate. The enzyme catalyses 1D-myo-inositol 5-phosphate + H2O = myo-inositol + phosphate. It catalyses the reaction 1D-myo-inositol 6-phosphate + H2O = myo-inositol + phosphate. It carries out the reaction alpha-D-glucose 1-phosphate + H2O = D-glucose + phosphate. The catalysed reaction is glycerol 2-phosphate + H2O = glycerol + phosphate. The enzyme catalyses adenosine 2'-phosphate + H2O = adenosine + phosphate. It participates in polyol metabolism; myo-inositol biosynthesis; myo-inositol from D-glucose 6-phosphate: step 2/2. In terms of biological role, phosphatase that can use myo-inositol monophosphates, myo-inositol 1,4-diphosphate, scyllo-inositol-1,4-diphosphate, glucose-1-phosphate, beta-glycerophosphate and 2'-AMP as substrates in vitro. No physiological substrates has been described yet. Has been implicated as the pharmacological target for lithium Li(+) action in brain. The protein is Inositol monophosphatase 2 of Mus musculus (Mouse).